Consider the following 430-residue polypeptide: NEDD8-activating enzyme E1 catalytic subunit (430 aa).

Glycine 52–threonine 76 provides a ligand contact to ATP. Cysteine 211 functions as the Glycyl thioester intermediate in the catalytic mechanism.

Belongs to the ubiquitin-activating E1 family. UBA3 subfamily. As to quaternary structure, heterodimer of uba-3 and ula-1. Interacts with NEDD8 and ubc-12. Expressed in intestine, vulva epithelium and head and tail neurons.

The protein localises to the nucleus. It is found in the cytoplasm. The catalysed reaction is ATP + [NEDD8 protein] + [E1 NEDD8-activating enzyme]-L-cysteine = AMP + diphosphate + [E1 NEDD8-activating enzyme]-S-[NEDD8 protein]-yl-L-cysteine.. Its pathway is protein modification; protein neddylation. Functionally, catalytic subunit of the dimeric rfl-1 (uba-3)-ula-1 E1 enzyme. E1 activates NEDD8 by first adenylating its C-terminal glycine residue with ATP, thereafter linking this residue to the side chain of the catalytic cysteine, yielding a NEDD8-uba-3 thioester and free AMP. E1 finally transfers NEDD8 to the catalytic cysteine of ubc-12. Required for cytokinesis and mitotic spindle orientation during early embryogenesis. The polypeptide is NEDD8-activating enzyme E1 catalytic subunit (Caenorhabditis elegans).